A 1249-amino-acid chain; its full sequence is Fanconi anemia group J protein (1249 aa).

The Helicase ATP-binding domain occupies 11–442 (GGVKIYFPYK…KDHEPLRAVC (432 aa)). Over residues 102–127 (QGTSRHFNYPSTPPSERNGTSSTCQD) the composition is skewed to polar residues. The tract at residues 102–131 (QGTSRHFNYPSTPPSERNGTSSTCQDSPEK) is disordered. The Nuclear localization signal motif lies at 158 to 175 (KKRIRPLETTQQIRKRHC). 185 to 192 (AKVDSGKT) is a binding site for ATP. Positions 283, 298, 310, and 350 each coordinate [4Fe-4S] cluster. The DEAH box signature appears at 393–396 (DEAH). A phosphoserine mark is found at Ser505, Ser927, Ser930, Ser956, Ser990, Ser1004, and Ser1032. Positions 888 to 1063 (HQKVLNVSIK…ESSNLTVNTS (176 aa)) are interaction with BRCA1. 2 disordered regions span residues 1018-1042 (KATPELGSSENSASSPPRFKTEKME) and 1108-1127 (VSEEDKQSTSNRDFETEAED). Residues 1023-1032 (LGSSENSASS) are compositionally biased toward polar residues. Residues 1110 to 1122 (EEDKQSTSNRDFE) are compositionally biased toward basic and acidic residues. The residue at position 1237 (Ser1237) is a Phosphoserine. N6-acetyllysine is present on Lys1249.

This sequence belongs to the DEAD box helicase family. DEAH subfamily. As to quaternary structure, interacts with the replication protein A complex (RPA) via the RPA1 subunit; following DNA damage they colocalize in foci in the nucleus. Binds directly to the BRCT domains of BRCA1. Interacts with the CIA complex components CIAO1, CIAO2B and MMS19. Requires [4Fe-4S] cluster as cofactor. Phosphorylated. Phosphorylation is necessary for interaction with BRCA1, and is cell-cycle regulated. Post-translationally, acetylation at Lys-1249 facilitates DNA end processing required for repair and checkpoint signaling. In terms of tissue distribution, ubiquitously expressed, with highest levels in testis.

It localises to the nucleus. It is found in the cytoplasm. It catalyses the reaction Couples ATP hydrolysis with the unwinding of duplex DNA at the replication fork by translocating in the 5'-3' direction. This creates two antiparallel DNA single strands (ssDNA). The leading ssDNA polymer is the template for DNA polymerase III holoenzyme which synthesizes a continuous strand.. The catalysed reaction is ATP + H2O = ADP + phosphate + H(+). Its activity is regulated as follows. Helicase activity on forked substrates is stimulated by replication protein A complex heterotrimer (RPA1, RPA2, RPA3). Helicase activity on G-quadruplex DNA is stimulated 3-fold by RPA, and inhibited by MSH2/MSH6. Unwinding of G-quadruplex DNA is inhibited by ATP-gamma-S and telomestatin (TMS); TMA does not inhibit unwinding of forked-duplex DNA. Helicase activity on dsDNA and G-quadruplex DNA is inhibited by porphyrin derivatives meso-tetra (N-methyl-4-pyridyl) porphine tetra tosylate (T4) and N-methyl mesoporphyrin IX (NMM). DNA-dependent ATPase and 5'-3' DNA helicase required for the maintenance of chromosomal stability. Acts late in the Fanconi anemia pathway, after FANCD2 ubiquitination. Involved in the repair of DNA double-strand breaks by homologous recombination in a manner that depends on its association with BRCA1. Involved in the repair of abasic sites at replication forks by promoting the degradation of DNA-protein cross-links: acts by catalyzing unfolding of HMCES DNA-protein cross-link via its helicase activity, exposing the underlying DNA and enabling cleavage of the DNA-protein adduct by the SPRTN metalloprotease. Can unwind RNA:DNA substrates. Unwinds G-quadruplex DNA; unwinding requires a 5'-single stranded tail. The protein is Fanconi anemia group J protein of Homo sapiens (Human).